The sequence spans 312 residues: MAAGVDCGDGVGARQHVFLVSEYLKDASKKMKNGLMFVKLVNPCSGEGAIYLFNMCLQQLFEVKVFKEKHHSWFINQSVQSGGLLHFATPVDPLFLLLHYLIKADKEGKFQPLDQVVVDNVFPNCILLLKLPGLEKLLHHVTEEKGNPEIDNKKYYKYSKEKTLKWLEKKVNQTVAALKTNNVNVSSRVQSTAFFSGDQASTDKEEDYIRYAHGLISDYIPKELSDDLSKYLKLPEPSASLPNPPSKKIKLSDEPVEAKEDYTKFNTKDLKTEKKNSKMTAAQKALAKVDKSGMKSIDTFFGVKNKKKIGKV.

Ala-2 is subject to N-acetylalanine. The disordered stretch occupies residues 236-256 (EPSASLPNPPSKKIKLSDEPV). Lys-295 bears the N6-acetyllysine mark. Phosphoserine is present on Ser-296.

It belongs to the RNase H2 subunit B family. In terms of assembly, the RNase H2 complex is a heterotrimer composed of the catalytic subunit RNASEH2A and the non-catalytic subunits RNASEH2B and RNASEH2C. As to expression, widely expressed.

It localises to the nucleus. Non catalytic subunit of RNase H2, an endonuclease that specifically degrades the RNA of RNA:DNA hybrids. Participates in DNA replication, possibly by mediating the removal of lagging-strand Okazaki fragment RNA primers during DNA replication. Mediates the excision of single ribonucleotides from DNA:RNA duplexes. The polypeptide is Ribonuclease H2 subunit B (RNASEH2B) (Homo sapiens (Human)).